Reading from the N-terminus, the 363-residue chain is 5-formaminoimidazole-4-carboxamide-1-(beta)-D-ribofuranosyl 5'-monophosphate synthetase (363 aa).

5-amino-1-(5-phospho-beta-D-ribosyl)imidazole-4-carboxamide is bound by residues His-29 and Ser-96. Positions 118–354 (RDILRWEAER…IALEIKNAIK (237 aa)) constitute an ATP-grasp domain. Residues 148–210 (PSEI…CNYC) and Glu-232 contribute to the ATP site. Position 260 (Asn-260) interacts with 5-amino-1-(5-phospho-beta-D-ribosyl)imidazole-4-carboxamide. Mg(2+) is bound by residues Gln-299 and Glu-312.

Belongs to the phosphohexose mutase family. Mg(2+) serves as cofactor. Mn(2+) is required as a cofactor.

The catalysed reaction is 5-amino-1-(5-phospho-beta-D-ribosyl)imidazole-4-carboxamide + formate + ATP = 5-formamido-1-(5-phospho-D-ribosyl)imidazole-4-carboxamide + ADP + phosphate. It participates in purine metabolism; IMP biosynthesis via de novo pathway; 5-formamido-1-(5-phospho-D-ribosyl)imidazole-4-carboxamide from 5-amino-1-(5-phospho-D-ribosyl)imidazole-4-carboxamide (formate route): step 1/1. Its function is as follows. Catalyzes the ATP- and formate-dependent formylation of 5-aminoimidazole-4-carboxamide-1-beta-d-ribofuranosyl 5'-monophosphate (AICAR) to 5-formaminoimidazole-4-carboxamide-1-beta-d-ribofuranosyl 5'-monophosphate (FAICAR) in the absence of folates. This is 5-formaminoimidazole-4-carboxamide-1-(beta)-D-ribofuranosyl 5'-monophosphate synthetase from Methanobrevibacter smithii (strain ATCC 35061 / DSM 861 / OCM 144 / PS).